The following is a 539-amino-acid chain: 3-hydroxy-3-methylglutaryl-coenzyme A reductase 1 (539 aa).

Residues 63-83 (FATVVCQLASVVYLLSLFAHP) form a helical membrane-spanning segment. Residues 84 to 124 (DAPATTTGDDDDGQGGSRRARPAAAEPAPMHGHGGGMMEAD) form a linker region. The segment at 87 to 116 (ATTTGDDDDGQGGSRRARPAAAEPAPMHGH) is disordered. Residues 105–114 (PAAAEPAPMH) are compositionally biased toward low complexity. The segment at 125-539 (DEEIVAAVAS…SSKDVAKAAS (415 aa)) is catalytic. Glutamate 218 functions as the Charge relay system in the catalytic mechanism. Asparagine 282 carries an N-linked (GlcNAc...) asparagine glycan. Catalysis depends on charge relay system residues lysine 350 and aspartate 426. Residues 496-516 (LATIVAGSVLAGELSLLAALA) traverse the membrane as a helical segment. Histidine 524 acts as the Proton donor in catalysis. Asparagine 528 carries an N-linked (GlcNAc...) asparagine glycan.

Belongs to the HMG-CoA reductase family.

It localises to the endoplasmic reticulum membrane. It catalyses the reaction (R)-mevalonate + 2 NADP(+) + CoA = (3S)-3-hydroxy-3-methylglutaryl-CoA + 2 NADPH + 2 H(+). It participates in metabolic intermediate biosynthesis; (R)-mevalonate biosynthesis; (R)-mevalonate from acetyl-CoA: step 3/3. Its function is as follows. Catalyzes the synthesis of mevalonate. The specific precursor of all isoprenoid compounds present in plants. This chain is 3-hydroxy-3-methylglutaryl-coenzyme A reductase 1 (HMG1), found in Oryza sativa subsp. indica (Rice).